We begin with the raw amino-acid sequence, 285 residues long: Pantothenate synthetase (285 aa).

Residue 33-40 (MGALHEGH) participates in ATP binding. Catalysis depends on His40, which acts as the Proton donor. A (R)-pantoate-binding site is contributed by Gln64. A beta-alanine-binding site is contributed by Gln64. 150–153 (GEKD) contributes to the ATP binding site. Gln156 lines the (R)-pantoate pocket. Residues Ala179 and 187 to 190 (LSSR) each bind ATP.

It belongs to the pantothenate synthetase family. Homodimer.

It is found in the cytoplasm. The catalysed reaction is (R)-pantoate + beta-alanine + ATP = (R)-pantothenate + AMP + diphosphate + H(+). The protein operates within cofactor biosynthesis; (R)-pantothenate biosynthesis; (R)-pantothenate from (R)-pantoate and beta-alanine: step 1/1. Its function is as follows. Catalyzes the condensation of pantoate with beta-alanine in an ATP-dependent reaction via a pantoyl-adenylate intermediate. In Caulobacter vibrioides (strain ATCC 19089 / CIP 103742 / CB 15) (Caulobacter crescentus), this protein is Pantothenate synthetase.